The sequence spans 296 residues: 4-hydroxy-tetrahydrodipicolinate synthase (296 aa).

Residue Thr-50 participates in pyruvate binding. The active-site Proton donor/acceptor is the Tyr-138. Lys-166 serves as the catalytic Schiff-base intermediate with substrate. Position 208 (Ile-208) interacts with pyruvate.

Belongs to the DapA family. Homotetramer; dimer of dimers.

Its subcellular location is the cytoplasm. The enzyme catalyses L-aspartate 4-semialdehyde + pyruvate = (2S,4S)-4-hydroxy-2,3,4,5-tetrahydrodipicolinate + H2O + H(+). It functions in the pathway amino-acid biosynthesis; L-lysine biosynthesis via DAP pathway; (S)-tetrahydrodipicolinate from L-aspartate: step 3/4. Its function is as follows. Catalyzes the condensation of (S)-aspartate-beta-semialdehyde [(S)-ASA] and pyruvate to 4-hydroxy-tetrahydrodipicolinate (HTPA). This chain is 4-hydroxy-tetrahydrodipicolinate synthase, found in Ruthia magnifica subsp. Calyptogena magnifica.